The following is a 443-amino-acid chain: 3-phosphoshikimate 1-carboxyvinyltransferase (443 aa).

The segment at 1–22 is disordered; sequence MSHASRPTPLEARGSTPLTGRV. 3-phosphoshikimate is bound by residues K28, S29, and R33. A phosphoenolpyruvate-binding site is contributed by K28. Phosphoenolpyruvate contacts are provided by G101 and R129. The 3-phosphoshikimate site is built by S174, Q176, D326, and K353. Q176 is a binding site for phosphoenolpyruvate. D326 functions as the Proton acceptor in the catalytic mechanism. Positions 357 and 400 each coordinate phosphoenolpyruvate.

It belongs to the EPSP synthase family. In terms of assembly, monomer.

Its subcellular location is the cytoplasm. It catalyses the reaction 3-phosphoshikimate + phosphoenolpyruvate = 5-O-(1-carboxyvinyl)-3-phosphoshikimate + phosphate. It participates in metabolic intermediate biosynthesis; chorismate biosynthesis; chorismate from D-erythrose 4-phosphate and phosphoenolpyruvate: step 6/7. Its function is as follows. Catalyzes the transfer of the enolpyruvyl moiety of phosphoenolpyruvate (PEP) to the 5-hydroxyl of shikimate-3-phosphate (S3P) to produce enolpyruvyl shikimate-3-phosphate and inorganic phosphate. The polypeptide is 3-phosphoshikimate 1-carboxyvinyltransferase (Afipia carboxidovorans (strain ATCC 49405 / DSM 1227 / KCTC 32145 / OM5) (Oligotropha carboxidovorans)).